Reading from the N-terminus, the 503-residue chain is Betaine aldehyde dehydrogenase 2 (503 aa).

161–170 (WNYPLLMATW) is a binding site for betaine aldehyde. 238 to 243 (GSYETG) is a binding site for NAD(+). Residues glutamate 260, 292–295 (QICS), and cysteine 453 each bind betaine aldehyde. Active-site residues include glutamate 260 and cysteine 294. Residues 260–261 (EL) and cysteine 294 each bind 4-aminobutanal. Tryptophan 459 contacts 4-aminobutanal. Positions 501–503 (SKL) match the Microbody targeting signal motif.

It belongs to the aldehyde dehydrogenase family. In terms of assembly, homodimer.

It is found in the peroxisome. It localises to the cytoplasm. It carries out the reaction betaine aldehyde + NAD(+) + H2O = glycine betaine + NADH + 2 H(+). The protein operates within amine and polyamine biosynthesis; betaine biosynthesis via choline pathway; betaine from betaine aldehyde: step 1/1. In terms of biological role, dehydrogenase that can use N-acetyl-c-aminobutyraldehyde (NAGABald), gamma-guanidinobutyraldehyde (GGBald), betaine aldehyde (Bet-ald), gamma-aminobutyraldehyde (GAB-ald), acetaldehyde, 4-aminobutylaldehyde (AB-ald), 3-aminopropionaldehyde (AP-ald), 4-N-trimethylaminobutyraldehyde (TMAB-ald) and 3-N-trimethylaminopropionaldehyde (TMAP-ald) as substrates. Catalyzes the oxidation of GAB-ald more efficiently than Bet-ald. Mediates the conversion of GAB-ald into gamma-aminobutyric acid (GABA), and prevents the formation of 2-acetyl-1-pyrroline (2AP) which gives fragrant rice its aromatic properties. This is Betaine aldehyde dehydrogenase 2 (BADH2) from Oryza sativa subsp. indica (Rice).